The chain runs to 359 residues: Alanine racemase, biosynthetic (359 aa).

K34 functions as the Proton acceptor; specific for D-alanine in the catalytic mechanism. K34 bears the N6-(pyridoxal phosphate)lysine mark. R129 lines the substrate pocket. The active-site Proton acceptor; specific for L-alanine is Y255. M303 contacts substrate.

Belongs to the alanine racemase family. It depends on pyridoxal 5'-phosphate as a cofactor.

The catalysed reaction is L-alanine = D-alanine. Its pathway is amino-acid biosynthesis; D-alanine biosynthesis; D-alanine from L-alanine: step 1/1. It participates in cell wall biogenesis; peptidoglycan biosynthesis. Functionally, catalyzes the interconversion of L-alanine and D-alanine. Provides the D-alanine required for cell wall biosynthesis. The chain is Alanine racemase, biosynthetic (alr) from Escherichia coli O6:H1 (strain CFT073 / ATCC 700928 / UPEC).